Here is a 207-residue protein sequence, read N- to C-terminus: dITP/XTP pyrophosphatase (207 aa).

Position 8-13 (8-13 (TNNKNK)) interacts with substrate. Asp72 functions as the Proton acceptor in the catalytic mechanism. Position 72 (Asp72) interacts with Mg(2+). Residues Ser73, 157–160 (FGYD), Lys180, and 185–186 (HR) each bind substrate.

The protein belongs to the HAM1 NTPase family. Homodimer. It depends on Mg(2+) as a cofactor.

It catalyses the reaction XTP + H2O = XMP + diphosphate + H(+). The enzyme catalyses dITP + H2O = dIMP + diphosphate + H(+). The catalysed reaction is ITP + H2O = IMP + diphosphate + H(+). Pyrophosphatase that catalyzes the hydrolysis of nucleoside triphosphates to their monophosphate derivatives, with a high preference for the non-canonical purine nucleotides XTP (xanthosine triphosphate), dITP (deoxyinosine triphosphate) and ITP. Seems to function as a house-cleaning enzyme that removes non-canonical purine nucleotides from the nucleotide pool, thus preventing their incorporation into DNA/RNA and avoiding chromosomal lesions. This is dITP/XTP pyrophosphatase from Lactobacillus johnsonii (strain CNCM I-12250 / La1 / NCC 533).